We begin with the raw amino-acid sequence, 269 residues long: MSVSRKRIDHCNDCANKNGSGWRIVNVKDVTYRKERCSDVFKHEPRCQCGCQDKHHDRHDPCVPDECSKTDKQLTIVSAVNPTSNLIIPEAGVLPVPVNNVILNGWTLTTPDLLNSFNPSTGIFTATESGDYEINLVLSFKSSAFLNATENLSNVPQVSIIDAATGLPLNEAIQGFPTTSSQVVVDVPVVPPIPVLVTVTSVLGVGQISLSIIISLSAGQQVEILVSSNGLSHIPSSFPVGPATFTFNTGTSLIVKKVRNIPKVIYSLC.

This is an uncharacterized protein from Acanthamoeba polyphaga (Amoeba).